The primary structure comprises 56 residues: MVSKEKINRINELARIAKERVLTKLEEEEQQILRKEYIEAFRKSFRKQLDNIELVD.

It belongs to the UPF0291 family.

It is found in the cytoplasm. The protein is UPF0291 protein Clos_1191 of Alkaliphilus oremlandii (strain OhILAs) (Clostridium oremlandii (strain OhILAs)).